The chain runs to 541 residues: Nif-specific regulatory protein (541 aa).

The 136-residue stretch at 23-158 (RLETTLNNFV…MAANLAGRAI (136 aa)) folds into the GAF domain. The tract at residues 170-191 (TFAEEQQEQQNSRDEQSQSSAR) is disordered. Positions 200–428 (IIGESTALMT…LENCVRRTAT (229 aa)) constitute a Sigma-54 factor interaction domain. ATP-binding positions include 228–235 (GETGTGKE) and 291–300 (ANGGTLLLDE). Positions 429–498 (LARSKTITSS…SAGVASNLIE (70 aa)) are inter-domain linker. Residues cysteine 442 and cysteine 447 each contribute to the a divalent metal cation site. The segment at 499 to 541 (RDRLISALEEAGWNQAKAARILEKTPRQVGYALRRHGVDVRKL) is C-terminal DNA-binding domain. Positions 513–532 (QAKAARILEKTPRQVGYALR) form a DNA-binding region, H-T-H motif.

Interacts with sigma-54.

Its function is as follows. Required for activation of most nif operons, which are directly involved in nitrogen fixation. The polypeptide is Nif-specific regulatory protein (nifA) (Rhizobium meliloti (strain 1021) (Ensifer meliloti)).